The sequence spans 330 residues: Copper-containing nitrite reductase (330 aa).

Plastocyanin-like domains follow at residues 1 to 165 (GLPR…YDRV) and 166 to 330 (YTIG…PGPA). Residues H85, H90, H125, C126, H135, M140, and H296 each contribute to the Cu cation site.

The protein belongs to the multicopper oxidase family. Homotrimer. It depends on Cu(2+) as a cofactor. Cu(+) serves as cofactor. Requires FAD as cofactor.

It is found in the periplasm. It catalyses the reaction nitric oxide + Fe(III)-[cytochrome c] + H2O = Fe(II)-[cytochrome c] + nitrite + 2 H(+). It participates in nitrogen metabolism; nitrate reduction (denitrification); dinitrogen from nitrate: step 2/4. The protein is Copper-containing nitrite reductase (nirK) of Alcaligenes xylosoxydans xylosoxydans (Achromobacter xylosoxidans).